The following is a 163-amino-acid chain: Ribosome maturation factor RimM (163 aa).

The PRC barrel domain maps to 92–161 (PGEYYHHDLI…AETVTVNAAF (70 aa)).

This sequence belongs to the RimM family. Binds ribosomal protein uS19.

The protein localises to the cytoplasm. An accessory protein needed during the final step in the assembly of 30S ribosomal subunit, possibly for assembly of the head region. Essential for efficient processing of 16S rRNA. May be needed both before and after RbfA during the maturation of 16S rRNA. It has affinity for free ribosomal 30S subunits but not for 70S ribosomes. The protein is Ribosome maturation factor RimM of Sphingopyxis alaskensis (strain DSM 13593 / LMG 18877 / RB2256) (Sphingomonas alaskensis).